A 908-amino-acid polypeptide reads, in one-letter code: Probable disease resistance RPP8-like protein 4 (908 aa).

Positions 15-57 form a coiled coil; the sequence is DLLSRESERLQGIDEQLDGLKRQLRSLQSLLKDADAKKHGSDR. Residues 146–459 enclose the NB-ARC domain; that stretch reads RQRVQREIRQ…AEGIYDGSTI (314 aa). Residue 192 to 199 participates in ATP binding; sequence GMGGIGKT. LRR repeat units follow at residues 575–599, 600–623, and 842–867; these read LTLL…SIGG, LIHL…MRNL, and MPCL…KYIT.

This sequence belongs to the disease resistance NB-LRR family. RPP8/HRT subfamily.

Its function is as follows. Potential disease resistance protein. This is Probable disease resistance RPP8-like protein 4 (RPP8L4) from Arabidopsis thaliana (Mouse-ear cress).